Reading from the N-terminus, the 329-residue chain is Trans-1,2-dihydrobenzene-1,2-diol dehydrogenase (329 aa).

This sequence belongs to the Gfo/Idh/MocA family. As to quaternary structure, homodimer. Lens, liver and small intestine.

The enzyme catalyses (1R,2R)-1,2-dihydrobenzene-1,2-diol + NADP(+) = catechol + NADPH + H(+). It carries out the reaction D-xylose + NADP(+) = D-xylono-1,5-lactone + NADPH + H(+). Stimulated by various salts. This is Trans-1,2-dihydrobenzene-1,2-diol dehydrogenase (DHDH) from Oryctolagus cuniculus (Rabbit).